The primary structure comprises 546 residues: Chaperonin GroEL (546 aa).

ATP-binding positions include 30 to 33 (TLGP), lysine 51, 87 to 91 (DGTTT), glycine 415, and aspartate 496. Residues 526–546 (PEDKPAPAMPGGMGGMGGMDF) form a disordered region. A compositionally biased stretch (gly residues) spans 536–546 (GGMGGMGGMDF).

Belongs to the chaperonin (HSP60) family. As to quaternary structure, forms a cylinder of 14 subunits composed of two heptameric rings stacked back-to-back. Interacts with the co-chaperonin GroES.

It localises to the cytoplasm. The enzyme catalyses ATP + H2O + a folded polypeptide = ADP + phosphate + an unfolded polypeptide.. Functionally, together with its co-chaperonin GroES, plays an essential role in assisting protein folding. The GroEL-GroES system forms a nano-cage that allows encapsulation of the non-native substrate proteins and provides a physical environment optimized to promote and accelerate protein folding. The sequence is that of Chaperonin GroEL from Zymomonas mobilis subsp. mobilis (strain ATCC 31821 / ZM4 / CP4).